The sequence spans 336 residues: Phospho-N-acetylmuramoyl-pentapeptide-transferase (336 aa).

10 helical membrane passes run 3–23, 52–72, 79–99, 123–143, 144–164, 175–195, 201–221, 227–247, 255–275, and 315–335; these read LSIM…PRFI, MGGT…SIIL, NLGA…IGFL, LIAG…SAIN, IFGF…FWVV, GIDG…GIIA, FDIL…FVFN, VFMG…ISIA, LFIG…VAYF, and VDAF…AILY.

The protein belongs to the glycosyltransferase 4 family. MraY subfamily. Mg(2+) serves as cofactor.

It localises to the cell membrane. The enzyme catalyses UDP-N-acetyl-alpha-D-muramoyl-L-alanyl-gamma-D-glutamyl-L-lysyl-D-alanyl-D-alanine + di-trans,octa-cis-undecaprenyl phosphate = Mur2Ac(oyl-L-Ala-gamma-D-Glu-L-Lys-D-Ala-D-Ala)-di-trans,octa-cis-undecaprenyl diphosphate + UMP. It participates in cell wall biogenesis; peptidoglycan biosynthesis. In terms of biological role, catalyzes the initial step of the lipid cycle reactions in the biosynthesis of the cell wall peptidoglycan: transfers peptidoglycan precursor phospho-MurNAc-pentapeptide from UDP-MurNAc-pentapeptide onto the lipid carrier undecaprenyl phosphate, yielding undecaprenyl-pyrophosphoryl-MurNAc-pentapeptide, known as lipid I. The polypeptide is Phospho-N-acetylmuramoyl-pentapeptide-transferase (Streptococcus agalactiae serotype Ia (strain ATCC 27591 / A909 / CDC SS700)).